The following is a 1414-amino-acid chain: DNA-directed RNA polymerase subunit beta' (1414 aa).

Zn(2+) is bound by residues Cys-70, Cys-72, Cys-85, and Cys-88. Residues Asp-460, Asp-462, and Asp-464 each coordinate Mg(2+). Cys-819, Cys-893, Cys-900, and Cys-903 together coordinate Zn(2+). Residues 1391 to 1414 (AEEAFDFGTPSAPAEEPQQHPAAE) form a disordered region. The span at 1400-1414 (PSAPAEEPQQHPAAE) shows a compositional bias: low complexity.

It belongs to the RNA polymerase beta' chain family. The RNAP catalytic core consists of 2 alpha, 1 beta, 1 beta' and 1 omega subunit. When a sigma factor is associated with the core the holoenzyme is formed, which can initiate transcription. Mg(2+) serves as cofactor. Requires Zn(2+) as cofactor.

It carries out the reaction RNA(n) + a ribonucleoside 5'-triphosphate = RNA(n+1) + diphosphate. Its function is as follows. DNA-dependent RNA polymerase catalyzes the transcription of DNA into RNA using the four ribonucleoside triphosphates as substrates. This chain is DNA-directed RNA polymerase subunit beta', found in Burkholderia lata (strain ATCC 17760 / DSM 23089 / LMG 22485 / NCIMB 9086 / R18194 / 383).